A 156-amino-acid polypeptide reads, in one-letter code: Arginine repressor (156 aa).

The protein belongs to the ArgR family.

The protein localises to the cytoplasm. The protein operates within amino-acid biosynthesis; L-arginine biosynthesis [regulation]. Regulates arginine biosynthesis genes. The protein is Arginine repressor of Sodalis glossinidius (strain morsitans).